The sequence spans 69 residues: DNA-directed RNA polymerase subunit epsilon (69 aa).

The protein belongs to the RNA polymerase subunit epsilon family. RNAP is composed of a core of 2 alpha, a beta and a beta' subunit. The core is associated with a delta subunit, and at least one of epsilon or omega. When a sigma factor is associated with the core the holoenzyme is formed, which can initiate transcription.

It catalyses the reaction RNA(n) + a ribonucleoside 5'-triphosphate = RNA(n+1) + diphosphate. A non-essential component of RNA polymerase (RNAP). This Lysinibacillus sphaericus (strain C3-41) protein is DNA-directed RNA polymerase subunit epsilon.